The primary structure comprises 216 residues: MSLGLVGRKVGMTRIFTAEGDSIPVTVLDVSDNRVTQIKTVETDGYTAVQVAFGSRRASRVTKPLAGHLAKAGVEAGEILKEFRIDAAKAAELSNGAVVGADLFEVGQKVDVQGVSIGKGYAGTIKRYNFSSGRATHGNSRSHNVPGSIGMAQDPGRVFPGKRMTGHLGDVTVTVQNLEIARIDAERKLLLVKGAIPGAKGGKVFVTPAVKTKGAK.

Q153 is subject to N5-methylglutamine.

The protein belongs to the universal ribosomal protein uL3 family. In terms of assembly, part of the 50S ribosomal subunit. Forms a cluster with proteins L14 and L19. In terms of processing, methylated by PrmB.

Functionally, one of the primary rRNA binding proteins, it binds directly near the 3'-end of the 23S rRNA, where it nucleates assembly of the 50S subunit. The sequence is that of Large ribosomal subunit protein uL3 from Burkholderia ambifaria (strain MC40-6).